Consider the following 1033-residue polypeptide: Error-prone DNA polymerase (1033 aa).

It belongs to the DNA polymerase type-C family. DnaE2 subfamily.

The protein resides in the cytoplasm. It carries out the reaction DNA(n) + a 2'-deoxyribonucleoside 5'-triphosphate = DNA(n+1) + diphosphate. DNA polymerase involved in damage-induced mutagenesis and translesion synthesis (TLS). It is not the major replicative DNA polymerase. The chain is Error-prone DNA polymerase from Teredinibacter turnerae (strain ATCC 39867 / T7901).